The primary structure comprises 259 residues: GEM-like protein 1 (259 aa).

Residues 1–11 are compositionally biased toward basic and acidic residues; the sequence is MSGQENHDHGR. Residues 1 to 79 are disordered; that stretch reads MSGQENHDHG…PSPAPRNTMD (79 aa). Over residues 13-30 the composition is skewed to low complexity; it reads SSTPAAASEPSKAAAHSS. A GRAM domain is found at 138 to 215; that stretch reads KVFKQTFDCL…NQLKAVNPST (78 aa).

It belongs to the GEM family. Interacts with AFH1.

The protein is GEM-like protein 1 (FIP1) of Arabidopsis thaliana (Mouse-ear cress).